A 158-amino-acid chain; its full sequence is Protein GLUTAMINE DUMPER 1 (158 aa).

Residues 1–36 (MRPLSVQSKFEDVATSTSVNHHGVTPQSPWHSPVPY) lie on the Extracellular side of the membrane. A helical transmembrane segment spans residues 37 to 57 (LFGGLAAMLGLIAFALLILAC). Residues 58 to 158 (SYWRLSSSGE…DTGETTTTSH (101 aa)) are Cytoplasmic-facing. The interval 65–85 (SGEEDGQNVDEEKESRSGDKA) is disordered. Residues 66–76 (GEEDGQNVDEE) show a composition bias toward acidic residues. The VIMAG motif lies at 96 to 100 (VIMAG). Residues 126 to 158 (ISQEESVAKEEEKMREGEEEKVKDTGETTTTSH) form a disordered region. Over residues 131–151 (SVAKEEEKMREGEEEKVKDTG) the composition is skewed to basic and acidic residues.

This sequence belongs to the GLUTAMINE DUMPER 1 (TC 9.B.60) family. As to quaternary structure, interacts with LOG2. Post-translationally, ubiquitinated by LOG2 (in vitro). Expressed in the vascular tissues and in hydathodes. Expressed in the phloem and xylem (at the protein level).

Its subcellular location is the cell membrane. Functionally, probable subunit of an amino acid transporter involved in the regulation of the amino acid metabolism. Stimulates amino acid export by activating nonselective amino acid facilitators. Required the interaction with the RING-type E3 ubiquitin-protein ligase LOG2 to fulfill its function. Plays a role in the Gln export at hydathodes, at xylem parenchyma into xylem sap and from mesophyll into leaf apoplasm. Acts upstream genes involved in the salicylic acid (SA) pathway and in the geminivirus-host interaction. This is Protein GLUTAMINE DUMPER 1 (GDU1) from Arabidopsis thaliana (Mouse-ear cress).